A 90-amino-acid polypeptide reads, in one-letter code: HssA/B-like protein 4 (90 aa).

It belongs to the hssA/B family.

This is HssA/B-like protein 4 (hssl4) from Dictyostelium discoideum (Social amoeba).